The primary structure comprises 205 residues: Homeobox protein goosecoid-2 (205 aa).

Disordered stretches follow at residues 33–58 (SLPA…EPGA) and 185–205 (KRAS…KGSC). The segment at residues 126 to 185 (TRRHRTIFSEEQLQALEALFVQNQYPDVSTRERLAGRIRLREERVEVWFKNRRAKWRHQK) is a DNA-binding region (homeobox).

This sequence belongs to the paired homeobox family. Bicoid subfamily. As to expression, detected in adult testis and pituitary, and in 9-10 week fetal tissue (thorax). Probably expressed in other tissues at low levels.

The protein resides in the nucleus. Functionally, may have a role in development. May regulate its own transcription. May bind the bicoid consensus sequence TAATCC. The polypeptide is Homeobox protein goosecoid-2 (GSC2) (Homo sapiens (Human)).